Consider the following 379-residue polypeptide: Heterogeneous nuclear ribonucleoprotein A3 (379 aa).

At Met1 the chain carries N-acetylmethionine. A compositionally biased stretch (pro residues) spans 1–10; that stretch reads MEVKPPPGRP. Residues 1-34 form a disordered region; that stretch reads MEVKPPPGRPQPDSGRRRRRRGEEGHDPKEPEQL. A Glycyl lysine isopeptide (Lys-Gly) (interchain with G-Cter in SUMO2) cross-link involves residue Lys4. Ser14 bears the Phosphoserine mark. Over residues 21 to 34 the composition is skewed to basic and acidic residues; that stretch reads RGEEGHDPKEPEQL. An RRM 1 domain is found at 35–118; it reads RKLFIGGLSF…RAVSREDSVK (84 aa). Lys36 is covalently cross-linked (Glycyl lysine isopeptide (Lys-Gly) (interchain with G-Cter in SUMO2)). The residue at position 43 (Ser43) is a Phosphoserine. Dimethylated arginine; alternate is present on Arg52. Arg52 bears the Omega-N-methylarginine; alternate mark. An Omega-N-methylarginine modification is found at Arg76. 2 positions are modified to phosphoserine: Ser112 and Ser116. Lys118 is covalently cross-linked (Glycyl lysine isopeptide (Lys-Gly) (interchain with G-Cter in SUMO2)). Thr124 carries the phosphothreonine modification. The RRM 2 domain occupies 126–205; the sequence is KKIFVGGIKE…CEVKKALSKQ (80 aa). An N6-acetyllysine; alternate modification is found at Lys134. Residue Lys134 forms a Glycyl lysine isopeptide (Lys-Gly) (interchain with G-Cter in SUMO2); alternate linkage. Residues Lys151 and Lys182 each participate in a glycyl lysine isopeptide (Lys-Gly) (interchain with G-Cter in SUMO2) cross-link. Residues 204–225 form a disordered region; it reads KQEMQSAGSQRGRGGGSGNFMG. Residues Arg214, Arg216, Arg226, Arg239, and Arg246 each carry the omega-N-methylarginine; alternate modification. Asymmetric dimethylarginine; alternate is present on residues Arg214, Arg216, Arg226, Arg239, and Arg246. Positions 214-225 are enriched in gly residues; it reads RGRGGGSGNFMG. At Arg257 the chain carries Omega-N-methylarginine. Arg286 carries the asymmetric dimethylarginine modification. The tract at residues 335 to 379 is disordered; sequence NYSGQQQSNYGPMKGGSFGGRSSGSPYGGGYGSGGGSGGYGSRRF. A compositionally biased stretch (gly residues) spans 347–379; that stretch reads MKGGSFGGRSSGSPYGGGYGSGGGSGGYGSRRF. Phosphoserine is present on Ser351. Position 355 is an omega-N-methylarginine (Arg355). Ser359 bears the Phosphoserine mark. Phosphotyrosine occurs at positions 361 and 365. A phosphoserine mark is found at Ser367 and Ser371. Position 374 is a phosphotyrosine (Tyr374). Ser376 carries the phosphoserine modification.

In terms of assembly, identified in the spliceosome C complex.

The protein resides in the nucleus. Functionally, plays a role in cytoplasmic trafficking of RNA. Binds to the cis-acting response element, A2RE. May be involved in pre-mRNA splicing. The polypeptide is Heterogeneous nuclear ribonucleoprotein A3 (Hnrnpa3) (Mus musculus (Mouse)).